The sequence spans 189 residues: dCTP deaminase (189 aa).

DCTP contacts are provided by residues Lys-112–Arg-117, Thr-136–Glu-138, Gln-157, Tyr-171, and Gln-181. Glu-138 functions as the Proton donor/acceptor in the catalytic mechanism.

This sequence belongs to the dCTP deaminase family. In terms of assembly, homotrimer.

The enzyme catalyses dCTP + H2O + H(+) = dUTP + NH4(+). It participates in pyrimidine metabolism; dUMP biosynthesis; dUMP from dCTP (dUTP route): step 1/2. In terms of biological role, catalyzes the deamination of dCTP to dUTP. In Xanthomonas campestris pv. campestris (strain 8004), this protein is dCTP deaminase.